The following is a 779-amino-acid chain: Lon protease (779 aa).

In terms of domain architecture, Lon N-terminal spans 10–203 (LPLLPLRGLL…ILLTILNNER (194 aa)). 355–362 (GPPGVGKT) is a binding site for ATP. The Lon proteolytic domain maps to 591-772 (KDQVGSVTGL…DEVLRHALTK (182 aa)). Active-site residues include S678 and K721.

It belongs to the peptidase S16 family. In terms of assembly, homohexamer. Organized in a ring with a central cavity.

It is found in the cytoplasm. It catalyses the reaction Hydrolysis of proteins in presence of ATP.. Functionally, ATP-dependent serine protease that mediates the selective degradation of mutant and abnormal proteins as well as certain short-lived regulatory proteins. Required for cellular homeostasis and for survival from DNA damage and developmental changes induced by stress. Degrades polypeptides processively to yield small peptide fragments that are 5 to 10 amino acids long. Binds to DNA in a double-stranded, site-specific manner. The polypeptide is Lon protease (Brevibacillus choshinensis).